The sequence spans 1078 residues: Lon protease homolog, mitochondrial (1078 aa).

A mitochondrion-targeting transit peptide spans 1–27; the sequence is MIKASKCNKPRALFLVRVSIPRTFIRN. A compositionally biased stretch (basic and acidic residues) spans 71–123; sequence SEKEKQPSTDKSNDKDKPSRKEKGKDKEKENEEKKDINMDEKYEINEETDTKP. The segment at 71–179 is disordered; it reads SEKEKQPSTD…KEFLSPSDSG (109 aa). Residues 127 to 157 are compositionally biased toward low complexity; it reads PNNPVSSKSNISSSSGGDNNNNNNNNNNNND. A compositionally biased stretch (basic and acidic residues) spans 158–172; it reads SDGKNDDGSPKDKEF. In terms of domain architecture, Lon N-terminal spans 182-400; that stretch reads PPFLAIAMKD…LSLQLLQVEA (219 aa). An ATP-binding site is contributed by 548–555; it reads GPPGTGKT. The tract at residues 792–825 is disordered; the sequence is NSPIEYIQSNTEVKAETTTESQQEQEKEKEKDEE. Residues 815–825 are compositionally biased toward basic and acidic residues; sequence EQEKEKEKDEE. The Lon proteolytic domain maps to 861 to 1049; the sequence is TLNPGVATGL…SEVFEHLFQG (189 aa). Active-site residues include serine 955 and lysine 998.

It belongs to the peptidase S16 family. Homohexamer or homoheptamer. Organized in a ring with a central cavity.

It localises to the mitochondrion matrix. It carries out the reaction Hydrolysis of proteins in presence of ATP.. In terms of biological role, ATP-dependent serine protease that mediates the selective degradation of misfolded, unassembled or oxidatively damaged polypeptides as well as certain short-lived regulatory proteins in the mitochondrial matrix. May also have a chaperone function in the assembly of inner membrane protein complexes. Participates in the regulation of mitochondrial gene expression and in the maintenance of the integrity of the mitochondrial genome. Binds to mitochondrial DNA in a site-specific manner. The sequence is that of Lon protease homolog, mitochondrial from Candida albicans (strain SC5314 / ATCC MYA-2876) (Yeast).